The primary structure comprises 339 residues: Phosphate acyltransferase (339 aa).

The protein belongs to the PlsX family. Homodimer. Probably interacts with PlsY.

The protein resides in the cytoplasm. The enzyme catalyses a fatty acyl-[ACP] + phosphate = an acyl phosphate + holo-[ACP]. Its pathway is lipid metabolism; phospholipid metabolism. Its function is as follows. Catalyzes the reversible formation of acyl-phosphate (acyl-PO(4)) from acyl-[acyl-carrier-protein] (acyl-ACP). This enzyme utilizes acyl-ACP as fatty acyl donor, but not acyl-CoA. The sequence is that of Phosphate acyltransferase from Tolumonas auensis (strain DSM 9187 / NBRC 110442 / TA 4).